A 354-amino-acid chain; its full sequence is Histidinol-phosphate aminotransferase (354 aa).

Lys208 bears the N6-(pyridoxal phosphate)lysine mark.

Belongs to the class-II pyridoxal-phosphate-dependent aminotransferase family. Histidinol-phosphate aminotransferase subfamily. Homodimer. The cofactor is pyridoxal 5'-phosphate.

It catalyses the reaction L-histidinol phosphate + 2-oxoglutarate = 3-(imidazol-4-yl)-2-oxopropyl phosphate + L-glutamate. The protein operates within amino-acid biosynthesis; L-histidine biosynthesis; L-histidine from 5-phospho-alpha-D-ribose 1-diphosphate: step 7/9. The chain is Histidinol-phosphate aminotransferase from Aquifex aeolicus (strain VF5).